Here is a 624-residue protein sequence, read N- to C-terminus: MKGQETRGFQSEVKQLLHLMIHSLYSNKEIFLRELISNASDAADKLRFRALSNPDLYEGDGELRVRVSFDKDKRTLTIADNGVGMNRDDVIDHLGTIAKSGTKSFLESMGSDQAKDSQLIGQFGVGFYSAFIVADKVTVRTRAAGDKPENGVFWESAGEGEYTVADITKDDRGTEITLHLREGEDEFLDDWRVRSIISKYSDHIALPVEIEKQEEKDGETIVSWEKINKAQALWTRNKSEIKDDEYNEFYKHIAHDFTDPLTWSHNRVEGKQEYTSLLYIPSQAPWDMWNRDHKHGLKLYVQRVFIMDDAEQFMPNYLRFVRGLIDSNDLPLNVSREILQDSTVTRNLRSALTKRVLQMLEKLAKDDAEKYQTFWKQFGLVLKEGPAEDHANQEAIAKLMRFASTHTDSSAQTVSLEDYISRMKEGQEKIYYITADSYAAAKSSPHLELLRKKGIEVLLLSDRIDEWMMNYLTEFDGKAFQSVSKVDESLEKLADEVDESAKEAEKALTPFVERVKTLLGDRVKEVRLTHRLTDTPAIVTTDADEMSTQMAKLFAAAGQAVPEVKYIFELNPDHVLVKRTADTQDEAQFNEWVELLLDQALFAERGTLEDPNQFIRRMNQLLVS.

Residues 1–336 (MKGQETRGFQ…SNDLPLNVSR (336 aa)) are a; substrate-binding. Residues 337 to 552 (EILQDSTVTR…ADEMSTQMAK (216 aa)) form a b region. The c stretch occupies residues 553-624 (LFAAAGQAVP…IRRMNQLLVS (72 aa)).

It belongs to the heat shock protein 90 family. Homodimer.

It is found in the cytoplasm. Its function is as follows. Molecular chaperone. Has ATPase activity. The chain is Chaperone protein HtpG from Citrobacter koseri (strain ATCC BAA-895 / CDC 4225-83 / SGSC4696).